The primary structure comprises 1412 residues: DNA-directed RNA polymerase subunit beta' (1412 aa).

Zn(2+) contacts are provided by C70, C72, C85, and C88. Positions 460, 462, and 464 each coordinate Mg(2+). Zn(2+)-binding residues include C819, C893, C900, and C903. The tract at residues 1392–1412 is disordered; sequence EEAFEFGTPSAPAEEPQHPAE.

It belongs to the RNA polymerase beta' chain family. The RNAP catalytic core consists of 2 alpha, 1 beta, 1 beta' and 1 omega subunit. When a sigma factor is associated with the core the holoenzyme is formed, which can initiate transcription. The cofactor is Mg(2+). Requires Zn(2+) as cofactor.

The catalysed reaction is RNA(n) + a ribonucleoside 5'-triphosphate = RNA(n+1) + diphosphate. DNA-dependent RNA polymerase catalyzes the transcription of DNA into RNA using the four ribonucleoside triphosphates as substrates. This is DNA-directed RNA polymerase subunit beta' from Burkholderia mallei (strain NCTC 10247).